The following is a 420-amino-acid chain: rRNA methyltransferase 3, mitochondrial (420 aa).

The N-terminal 40 residues, 1-40, are a transit peptide targeting the mitochondrion; the sequence is MAALVRPARFVVRPLLQVVQAWDLDARRWVRALRRSPVKV. A disordered region spans residues 49–88; the sequence is EQKRAPGKQPRKAPSEASAQEQREKQPLEESASRAPSTWE. Basic and acidic residues predominate over residues 69–80; the sequence is EQREKQPLEESA. 3 residues coordinate S-adenosyl-L-methionine: glycine 356, isoleucine 380, and leucine 389.

The protein belongs to the class IV-like SAM-binding methyltransferase superfamily. RNA methyltransferase TrmH family. In terms of tissue distribution, expressed at same level in normal liver and hepatocarcinoma.

It is found in the mitochondrion. The catalysed reaction is guanosine(1370) in 16S rRNA + S-adenosyl-L-methionine = 2'-O-methylguanosine(1370) in 16S rRNA + S-adenosyl-L-homocysteine + H(+). In terms of biological role, S-adenosyl-L-methionine-dependent 2'-O-ribose methyltransferase that catalyzes the formation of 2'-O-methylguanosine at position 1370 (Gm1370) in the 16S mitochondrial large subunit ribosomal RNA (mtLSU rRNA), a conserved modification in the peptidyl transferase domain of the mtLSU rRNA. Also required for formation of 2'-O-methyluridine at position 1369 (Um1369) mediated by MRM2. The chain is rRNA methyltransferase 3, mitochondrial from Homo sapiens (Human).